The following is a 227-amino-acid chain: GTP:AMP phosphotransferase AK3, mitochondrial (227 aa).

5 residues coordinate GTP: Gly17, Gly19, Lys20, Gly21, and Thr22. Lys20 carries the post-translational modification N6-succinyllysine. Lys34 is modified (N6-acetyllysine). At Ser37 the chain carries Phosphoserine. The tract at residues 37–66 (SSGDLLRDNMLRGTEIGVLAKAFIDQGKLI) is NMP. AMP is bound by residues Ser38 and Arg43. N6-succinyllysine is present on Lys57. Residue Lys64 participates in AMP binding. N6-acetyllysine; alternate is present on residues Lys64 and Lys80. An N6-succinyllysine; alternate mark is found at Lys64 and Lys80. 3 residues coordinate AMP: Gly91, Arg94, and Gln98. The segment at 127 to 164 (ARWIHPASGRVYNIEFNPPKTVGIDDLTGEPLIQREDD) is LID. GTP contacts are provided by Arg128, Tyr138, Asn139, Arg161, and Arg172. N6-acetyllysine; alternate is present on residues Lys174 and Lys189. Residues Lys174 and Lys189 each carry the N6-succinyllysine; alternate modification. GTP is bound at residue Thr201. Residue Lys203 is modified to N6-acetyllysine.

The protein belongs to the adenylate kinase family. AK3 subfamily. As to quaternary structure, monomer. As to expression, highly expressed in heart, skeletal muscle and liver, moderately expressed in pancreas and kidney, and weakly expressed in placenta, brain and lung.

The protein resides in the mitochondrion matrix. The catalysed reaction is a ribonucleoside 5'-triphosphate + AMP = a ribonucleoside 5'-diphosphate + ADP. It catalyses the reaction GTP + AMP = GDP + ADP. The enzyme catalyses ITP + AMP = IDP + ADP. With respect to regulation, inhibited by ATP. Its function is as follows. Mitochondrial adenylate kinase with a specific GTP:AMP phosphotransferase activity. Could also use ITP as phosphate donor. Its physiological function is to recycle GTP into GDP which is necessary for the TCA cycle in the mitochondrial matrix. The sequence is that of GTP:AMP phosphotransferase AK3, mitochondrial from Homo sapiens (Human).